A 364-amino-acid chain; its full sequence is MERNSGPEAGPEAELEEGEPEVKKRKLMCVEFASVASCDAAVAQCYLAENDWEMERALNSYFEPAVEESASESRPESLSEPGSCVDLTKEETNDSISSKTSTSEDKSVQQEDGSVFSFITWNIDGLDMNNLLERARGVCSYLTLYSPDVIFLQEVIPPYYAYLKKKASSYKIITGREEGYFTAIMLKKSRVKFKSQEIIPFPNTQMMRNLLCVHVSVSGNELCLMTSHLESTRGHAKERMNQFKMVLEKMQEAPGSATVIFAGDTNLRDQEVTKCGGLPNNILDVWEFLGKPKHCQYTWDTQMNSNLGIAANCKLRFDRIFFRAAAEGGHIIPQSLDLLGLEKLDCGRFPSDHWGLLCTLDVIL.

The residue at position 1 (M1) is an N-acetylmethionine. Residues 1–10 are compositionally biased toward low complexity; that stretch reads MERNSGPEAG. The interval 1 to 21 is disordered; that stretch reads MERNSGPEAGPEAELEEGEPE. K23 is covalently cross-linked (Glycyl lysine isopeptide (Lys-Gly) (interchain with G-Cter in SUMO2)). The disordered stretch occupies residues 68–108; that stretch reads ESASESRPESLSEPGSCVDLTKEETNDSISSKTSTSEDKSV. T88 and T92 each carry phosphothreonine; by ACVR1B. A Phosphoserine modification is found at S95. The tract at residues 122–126 is interaction with 5' end of substrate DNA; sequence NIDGL. Residues D124 and E154 each contribute to the Mg(2+) site. Residues 228 to 233 form an interaction with 5' end of substrate DNA region; it reads HLESTR. D264 acts as the Proton donor/acceptor in catalysis. The segment at 266 to 268 is interaction with 5' end of substrate DNA; it reads NLR.

Belongs to the CCR4/nocturin family. Interacts with TRAF2, TRAF3, TRAF5, TRAF6, TNFRSF8/CD30, TNFRSF5/CD40, TNFRSF1B/TNF-R75, ETS1, ETS2, FLI1, SMAD3 and ACVR1B/ALK4. Mg(2+) serves as cofactor. The cofactor is Mn(2+). Ubiquitinated by TRAF6.

It is found in the nucleus. Its subcellular location is the PML body. The protein localises to the nucleolus. The protein resides in the cytoplasm. Functionally, DNA repair enzyme that can remove a variety of covalent adducts from DNA through hydrolysis of a 5'-phosphodiester bond, giving rise to DNA with a free 5' phosphate. Catalyzes the hydrolysis of dead-end complexes between DNA and the topoisomerase 2 (TOP2) active site tyrosine residue. The 5'-tyrosyl DNA phosphodiesterase activity can enable the repair of TOP2-induced DNA double-strand breaks/DSBs without the need for nuclease activity, creating a 'clean' DSB with 5'-phosphate termini that are ready for ligation. Thereby, protects the transcription of many genes involved in neurological development and maintenance from the abortive activity of TOP2. Hydrolyzes 5'-phosphoglycolates on protruding 5' ends on DSBs due to DNA damage by radiation and free radicals. Has preference for single-stranded DNA or duplex DNA with a 4 base pair overhang as substrate. Also has 3'-tyrosyl DNA phosphodiesterase activity, but less efficiently and much slower than TDP1. Constitutes the major if not only 5'-tyrosyl-DNA phosphodiesterase in cells. Also acts as an adapter by participating in the specific activation of MAP3K7/TAK1 in response to TGF-beta: associates with components of the TGF-beta receptor-TRAF6-TAK1 signaling module and promotes their ubiquitination dependent complex formation. Involved in non-canonical TGF-beta induced signaling routes. May also act as a negative regulator of ETS1 and may inhibit NF-kappa-B activation. Acts as a regulator of ribosome biogenesis following stress. In Bos taurus (Bovine), this protein is Tyrosyl-DNA phosphodiesterase 2 (TDP2).